Here is a 541-residue protein sequence, read N- to C-terminus: Malate synthase (541 aa).

Arg-169 serves as the catalytic Proton acceptor. The Proton donor role is filled by Asp-454.

This sequence belongs to the malate synthase family.

It localises to the cytoplasm. It carries out the reaction glyoxylate + acetyl-CoA + H2O = (S)-malate + CoA + H(+). It participates in carbohydrate metabolism; glyoxylate cycle; (S)-malate from isocitrate: step 2/2. The chain is Malate synthase (aceB) from Streptomyces clavuligerus.